A 93-amino-acid polypeptide reads, in one-letter code: Class II hydrophobin 1 (93 aa).

Positions Met1–Ala16 are cleaved as a signal peptide. Disulfide bonds link Cys24–Cys74, Cys35–Cys65, Cys36–Cys48, and Cys75–Cys86.

The protein belongs to the cerato-ulmin hydrophobin family. As to quaternary structure, interacts with maize ubiquilin 1-like (UBL) protein. Homotetramer. Further self-assembles to form highly ordered films at water-air interfaces through intermolecular interactions.

It is found in the cell membrane. In terms of biological role, aerial growth, conidiation, and dispersal of filamentous fungi in the environment rely upon a capability of their secreting small amphipathic proteins called hydrophobins (HPBs) with low sequence identity. Class I can self-assemble into an outermost layer of rodlet bundles on aerial cell surfaces, conferring cellular hydrophobicity that supports fungal growth, development and dispersal; whereas Class II form highly ordered films at water-air interfaces through intermolecular interactions but contribute nothing to the rodlet structure. Hyd1 is a class II hydrophobin that acts as an elicitor of induced systemic resistance (ISR) in plants. During interaction with the plant, binds with the maize target protein UBL in order to recruit more UBL proteins in maize roots to elicit plant defense responses, including cell death as well as brassinosteroid, jasmonate (JA) and ethylene (ET) signaling. The sequence is that of Class II hydrophobin 1 from Trichoderma harzianum (Hypocrea lixii).